Consider the following 1861-residue polypeptide: Protein TANC1 (1861 aa).

M1 is modified (N-acetylmethionine). Disordered regions lie at residues 1-46 (MLKA…SSLP), 63-99 (SLPSSPLLPRQSHLVQSRVNKKSPGPVRKPKYVESPR), 206-225 (KSPCETISSPSSTLESKDSG), 257-311 (QKGV…MPRP), and 439-486 (QIAS…ISAE). Over residues 8–21 (KSREGGKGGKKEAG) the composition is skewed to basic and acidic residues. A phosphoserine mark is found at S63, S66, S67, S207, and S270. Over residues 206 to 219 (KSPCETISSPSSTL) the composition is skewed to polar residues. Polar residues predominate over residues 440–455 (IASNSPGSSPKTSDPT). Residues 461–480 (TPLLSPSSSTSASSTAKTPL) are compositionally biased toward low complexity. S465 bears the Phosphoserine mark. 11 ANK repeats span residues 896–928 (EGLSAALASLRNLYTPNVKVSRLLILGGANVNY), 934–963 (NNAPILCVQSHLGHEEVVTLLLEFGACLDG), 967–996 (NGMTALCYAAAAGHMKLVCLLTKKGVRVDH), 1000–1029 (KGQCALVHSALRGHGDILQYLLTCEWSPGP), 1040–1069 (ALQQALTAAASMGHSSVVQCLLGMEKEHEV), 1078–1107 (WGETALTAAAGRGKLEVCELLLGHGAAVSR), 1111–1140 (RGVPPLFCAARQGHWQIVRLLLERGCDVNL), 1144–1173 (QGRTPLMVAACEGHLSTVEFLLSKGAALSS), 1177–1206 (EGLSALSWACLKGHRAVVQYLVEEGAAIDQ), 1210–1239 (NGRTPLDLAAFYGDAETVLYLVEKGAVIEH), and 1243–1272 (SGMRPLDRAIGCRNTSVVVALLRKGAKLGN). TPR repeat units lie at residues 1289-1322 (LQKLMEEGNVMYKKGKMKEAAQRYQYALRKFPRE), 1336-1369 (VSLYLNLSRCRRKTNDFGMAEEFASKALELKPKS), and 1371-1403 (EAFYARARAKRNSRQFVAALADLQEAVKLCPTN). The span at 1421–1431 (QRSQQQKQQGP) shows a compositional bias: low complexity. 2 disordered regions span residues 1421–1485 (QRSQ…SVPS) and 1636–1696 (VAVD…KVQG). S1439 carries the phosphoserine modification. 2 stretches are compositionally biased toward low complexity: residues 1467–1485 (QEESVSPTPRSQPSSSVPS) and 1659–1689 (SLTSSGSSGSPSSSIKMSSSTSSLTSSSSFS). Phosphoserine occurs at positions 1668, 1676, and 1677.

This sequence belongs to the TANC family. Interacts probably directly with DLG1, DLG4, HOMER1. Interacts with DLGAP1, INA, CAMK2A, GRIN2B and GRIA1. Interacts with TNIK. Interacts with MINK1. In terms of processing, phosphorylated; by MINK1 and TNIK upon stimulation by RAP2A.

Its subcellular location is the postsynaptic density. Its function is as follows. May be a scaffold component in the postsynaptic density. This chain is Protein TANC1 (TANC1), found in Homo sapiens (Human).